We begin with the raw amino-acid sequence, 210 residues long: Pyridoxine/pyridoxamine 5'-phosphate oxidase (210 aa).

Substrate contacts are provided by residues 7 to 10 (RQSY) and Lys65. FMN-binding positions include 60–65 (RIVLIK), 75–76 (FT), Arg81, Lys82, and Gln104. Residues Tyr122, Arg126, and Ser130 each coordinate substrate. FMN contacts are provided by residues 139-140 (QS) and Trp182. 188–190 (RLH) serves as a coordination point for substrate. Arg192 is an FMN binding site.

It belongs to the pyridoxamine 5'-phosphate oxidase family. Homodimer. It depends on FMN as a cofactor.

It catalyses the reaction pyridoxamine 5'-phosphate + O2 + H2O = pyridoxal 5'-phosphate + H2O2 + NH4(+). The catalysed reaction is pyridoxine 5'-phosphate + O2 = pyridoxal 5'-phosphate + H2O2. It functions in the pathway cofactor metabolism; pyridoxal 5'-phosphate salvage; pyridoxal 5'-phosphate from pyridoxamine 5'-phosphate: step 1/1. The protein operates within cofactor metabolism; pyridoxal 5'-phosphate salvage; pyridoxal 5'-phosphate from pyridoxine 5'-phosphate: step 1/1. Its function is as follows. Catalyzes the oxidation of either pyridoxine 5'-phosphate (PNP) or pyridoxamine 5'-phosphate (PMP) into pyridoxal 5'-phosphate (PLP). The polypeptide is Pyridoxine/pyridoxamine 5'-phosphate oxidase (Bordetella avium (strain 197N)).